The sequence spans 329 residues: MELHILEHRLKVASIAKENIQLFTYGLIKLAFLSSKTRCKFFSLTETPEDYTIIVDEEGFLELPSSEHLSVADATWLALNVVSGGGSSSSSQPIGVTKIAKSVIAPLADQNISVFMLSTYQTDFILVRERDLPFVMHTLAAEFTILQVVNGETVAADNLGVTNGFVKPKLVQRPVIHPLSSPSNMFCVTSLDPYTLPTVTTLLMDVMFYSNGVKDSVVGSEEPDHIRFFSFSLIEGYISLVMDVQTQQRFPSNLLFTSASGELWKMVRIGGQPLGFDECGIVAQISEPLAAADIPAYYISTFKFDHALVPEENINGVINALQVSQAEKH.

ACT domains are found at residues 72 to 139 (ADAT…MHTL) and 262 to 322 (ELWK…NALQ).

The protein belongs to the GATS family. May form homodimers and heterodimers.

The protein localises to the cytoplasm. The protein resides in the cytosol. Functionally, functions as a negative regulator of the TORC1 signaling pathway. This Xenopus laevis (African clawed frog) protein is Cytosolic arginine sensor for mTORC1 subunit 2.